The primary structure comprises 206 residues: Ribonuclease M5 (206 aa).

In terms of domain architecture, Toprim spans 8–91 (NEVIVVEGRD…AFLNRDEARP (84 aa)). Mg(2+)-binding residues include Glu-14, Asp-60, and Asp-62.

Belongs to the ribonuclease M5 family. It depends on Mg(2+) as a cofactor.

It localises to the cytoplasm. The catalysed reaction is Endonucleolytic cleavage of RNA, removing 21 and 42 nucleotides, respectively, from the 5'- and 3'-termini of a 5S-rRNA precursor.. In terms of biological role, required for correct processing of both the 5' and 3' ends of 5S rRNA precursor. Cleaves both sides of a double-stranded region yielding mature 5S rRNA in one step. In Lactococcus lactis subsp. lactis (strain IL1403) (Streptococcus lactis), this protein is Ribonuclease M5.